A 506-amino-acid polypeptide reads, in one-letter code: Probable Xaa-Pro aminopeptidase PADG_06815 (506 aa).

The Mn(2+) site is built by aspartate 285, aspartate 296, glutamate 433, and glutamate 471.

Belongs to the peptidase M24B family. Requires Mn(2+) as cofactor.

The enzyme catalyses Release of any N-terminal amino acid, including proline, that is linked to proline, even from a dipeptide or tripeptide.. Functionally, catalyzes the removal of a penultimate prolyl residue from the N-termini of peptides. The sequence is that of Probable Xaa-Pro aminopeptidase PADG_06815 from Paracoccidioides brasiliensis (strain Pb18).